The primary structure comprises 148 residues: Transcriptional regulator MraZ (148 aa).

SpoVT-AbrB domains are found at residues 5–53 and 82–125; these read ETAI…AEKE and SAVL…SEQA.

The protein belongs to the MraZ family. In terms of assembly, forms oligomers.

Its subcellular location is the cytoplasm. The protein resides in the nucleoid. This Xanthomonas axonopodis pv. citri (strain 306) protein is Transcriptional regulator MraZ.